The chain runs to 98 residues: Aspartyl/glutamyl-tRNA(Asn/Gln) amidotransferase subunit C (98 aa).

Belongs to the GatC family. Heterotrimer of A, B and C subunits.

The catalysed reaction is L-glutamyl-tRNA(Gln) + L-glutamine + ATP + H2O = L-glutaminyl-tRNA(Gln) + L-glutamate + ADP + phosphate + H(+). It catalyses the reaction L-aspartyl-tRNA(Asn) + L-glutamine + ATP + H2O = L-asparaginyl-tRNA(Asn) + L-glutamate + ADP + phosphate + 2 H(+). In terms of biological role, allows the formation of correctly charged Asn-tRNA(Asn) or Gln-tRNA(Gln) through the transamidation of misacylated Asp-tRNA(Asn) or Glu-tRNA(Gln) in organisms which lack either or both of asparaginyl-tRNA or glutaminyl-tRNA synthetases. The reaction takes place in the presence of glutamine and ATP through an activated phospho-Asp-tRNA(Asn) or phospho-Glu-tRNA(Gln). In Microcystis aeruginosa (strain NIES-843 / IAM M-2473), this protein is Aspartyl/glutamyl-tRNA(Asn/Gln) amidotransferase subunit C.